The chain runs to 359 residues: DNA polymerase IV (359 aa).

Residues 4–185 enclose the UmuC domain; it reads IIHIDMDCYF…LSLRKIPGVG (182 aa). 2 residues coordinate Mg(2+): aspartate 8 and aspartate 103. Residue glutamate 104 is part of the active site.

It belongs to the DNA polymerase type-Y family. As to quaternary structure, monomer. Mg(2+) is required as a cofactor.

The protein resides in the cytoplasm. The enzyme catalyses DNA(n) + a 2'-deoxyribonucleoside 5'-triphosphate = DNA(n+1) + diphosphate. Functionally, poorly processive, error-prone DNA polymerase involved in untargeted mutagenesis. Copies undamaged DNA at stalled replication forks, which arise in vivo from mismatched or misaligned primer ends. These misaligned primers can be extended by PolIV. Exhibits no 3'-5' exonuclease (proofreading) activity. May be involved in translesional synthesis, in conjunction with the beta clamp from PolIII. The polypeptide is DNA polymerase IV (Shewanella sp. (strain ANA-3)).